A 183-amino-acid polypeptide reads, in one-letter code: Streptavidin-V2 (183 aa).

Positions 1-24 are cleaved as a signal peptide; it reads MRKIVVAAIAVSLTTVGITASASA. An Avidin-like domain is found at 37–159; sequence AEAGITGTWY…GHDTFTKVKP (123 aa). 2 residues coordinate biotin: tyrosine 67 and tyrosine 78. Residues 83–85 carry the Cell attachment site; atypical motif; sequence RYD. 3 residues coordinate biotin: tryptophan 116, tryptophan 132, and tryptophan 144.

Belongs to the avidin/streptavidin family. As to quaternary structure, homotetramer.

The protein resides in the secreted. The biological function of streptavidin is not known. Forms a strong non-covalent specific complex with biotin (one molecule of biotin per subunit of streptavidin). The protein is Streptavidin-V2 of Streptomyces violaceus (Streptomyces venezuelae).